The sequence spans 380 residues: MDGAKFENTVAFLPSEIFDCYNSTLPKNVFRSFVTWSCYEKFNSLEFRTWLLMWLPLIIAWKIRGKRHYLVIVTALMFEVLYFLWTYSYIFRERTLGKQVSQFAKEIITNTPGIDTEDWERVAVNFNSYLYENKLWNTEYFFFDGSSCQEAFRKMLLEPFSLKKNDFANAKVPDGSVCYTEKALQVYFTQIERKWHWINSEGFLHNKTTQSVQFSKHGYGSKLLWAFKEVTIMNSRFAFFSIAYLNGLLTIPRLRNSLHILYVCAVLSSMIIEYLIGIDKFRFKSMNLIHKLQFLSYITCGHEKSDATNWSQIAKRTNTYMFEQKIWNSPILFSDGIDCEKFFKWYFSTPVSSQASLSVGSTDFELWPYIKEAQSACNDV.

The Cytoplasmic portion of the chain corresponds to 1-70; the sequence is MDGAKFENTV…WKIRGKRHYL (70 aa). The helical transmembrane segment at 71–91 threads the bilayer; it reads VIVTALMFEVLYFLWTYSYIF. At 92–231 the chain is on the extracellular side; that stretch reads RERTLGKQVS…KLLWAFKEVT (140 aa). A helical transmembrane segment spans residues 232–252; sequence IMNSRFAFFSIAYLNGLLTIP. Residues 253–257 are Cytoplasmic-facing; sequence RLRNS. A helical membrane pass occupies residues 258–278; sequence LHILYVCAVLSSMIIEYLIGI. The Extracellular portion of the chain corresponds to 279-380; sequence DKFRFKSMNL…KEAQSACNDV (102 aa).

The protein belongs to the DUP/COS family.

It is found in the membrane. This Saccharomyces cerevisiae (strain ATCC 204508 / S288c) (Baker's yeast) protein is Protein COS12 (COS12).